The primary structure comprises 252 residues: Trans-aconitate 2-methyltransferase (252 aa).

The protein belongs to the methyltransferase superfamily. Tam family.

The protein localises to the cytoplasm. The catalysed reaction is trans-aconitate + S-adenosyl-L-methionine = (E)-3-(methoxycarbonyl)pent-2-enedioate + S-adenosyl-L-homocysteine. Functionally, catalyzes the S-adenosylmethionine monomethyl esterification of trans-aconitate. This is Trans-aconitate 2-methyltransferase from Escherichia coli (strain 55989 / EAEC).